The following is a 183-amino-acid chain: NAD(P)H-quinone oxidoreductase subunit I, chloroplastic (183 aa).

4Fe-4S ferredoxin-type domains follow at residues 55-84 and 95-124; these read GRIH…VDWE and KNYS…MTEE. [4Fe-4S] cluster contacts are provided by Cys-64, Cys-67, Cys-70, Cys-74, Cys-104, Cys-107, Cys-110, and Cys-114.

Belongs to the complex I 23 kDa subunit family. As to quaternary structure, NDH is composed of at least 16 different subunits, 5 of which are encoded in the nucleus. [4Fe-4S] cluster is required as a cofactor.

Its subcellular location is the plastid. It is found in the chloroplast thylakoid membrane. It catalyses the reaction a plastoquinone + NADH + (n+1) H(+)(in) = a plastoquinol + NAD(+) + n H(+)(out). The catalysed reaction is a plastoquinone + NADPH + (n+1) H(+)(in) = a plastoquinol + NADP(+) + n H(+)(out). NDH shuttles electrons from NAD(P)H:plastoquinone, via FMN and iron-sulfur (Fe-S) centers, to quinones in the photosynthetic chain and possibly in a chloroplast respiratory chain. The immediate electron acceptor for the enzyme in this species is believed to be plastoquinone. Couples the redox reaction to proton translocation, and thus conserves the redox energy in a proton gradient. In Marchantia polymorpha (Common liverwort), this protein is NAD(P)H-quinone oxidoreductase subunit I, chloroplastic.